A 1281-amino-acid polypeptide reads, in one-letter code: Enterobactin synthase component F (1281 aa).

The elongation/condensation stretch occupies residues 1–301 (MSQHLPLVAA…NVLPLGIHIA (301 aa)). Positions 486–891 (SYREMHEQVV…ALPDVKQAVT (406 aa)) are adenylation. In terms of domain architecture, Carrier spans 975 to 1050 (APKAGSETII…KLATIIDGEE (76 aa)). Serine 1010 carries the post-translational modification O-(pantetheine 4'-phosphoryl)serine. The interval 1070–1281 (PTLFCFHPAS…GPIIRATLNR (212 aa)) is thioesterase. Histidine 1259 acts as the Proton acceptor; for thioesterase activity in catalysis.

This sequence belongs to the ATP-dependent AMP-binding enzyme family. EntF subfamily. In terms of assembly, proteins EntB, EntD, EntE and EntF are the component of the enterobactin synthase. Components probably do not form a stable complex. EntF acts as a catalytic monomer. Pantetheine 4'-phosphate is required as a cofactor. 4'-phosphopantetheine is transferred from CoA to a specific serine of apo-EntF by EntD. Holo-EntF so formed is then acylated with seryl-AMP.

It localises to the cytoplasm. It catalyses the reaction 3 2,3-dihydroxybenzoate + 3 L-serine + 6 ATP = enterobactin + 6 AMP + 6 diphosphate + 4 H(+). It carries out the reaction holo-[peptidyl-carrier protein] + L-serine + ATP = L-seryl-[peptidyl-carrier protein] + AMP + diphosphate. It functions in the pathway siderophore biosynthesis; enterobactin biosynthesis. Involved in the biosynthesis of the siderophore enterobactin (enterochelin), which is a macrocyclic trimeric lactone of N-(2,3-dihydroxybenzoyl)-serine. EntF catalyzes the activation of L-serine via ATP-dependent PPi exchange reaction to form seryladenylate. Activated L-serine is loaded onto the peptidyl carrier domain via a thioester linkage to the phosphopanthetheine moiety, forming seryl-S-Ppant-EntF. EntF acts then as the sole catalyst for the formation of the three amide and three ester linkages found in enterobactin, using seryladenylate and 2,3-dihydroxybenzoate-S-Ppant-EntB (DHB-S-Ppant-EntB) as substrates, via the formation of a DHB-Ser-S-Ppant-EntF intermediate. The protein is Enterobactin synthase component F (entF) of Shigella flexneri.